A 120-amino-acid polypeptide reads, in one-letter code: Large ribosomal subunit protein uL22 (120 aa).

The protein belongs to the universal ribosomal protein uL22 family. Part of the 50S ribosomal subunit.

In terms of biological role, this protein binds specifically to 23S rRNA; its binding is stimulated by other ribosomal proteins, e.g. L4, L17, and L20. It is important during the early stages of 50S assembly. It makes multiple contacts with different domains of the 23S rRNA in the assembled 50S subunit and ribosome. Its function is as follows. The globular domain of the protein is located near the polypeptide exit tunnel on the outside of the subunit, while an extended beta-hairpin is found that lines the wall of the exit tunnel in the center of the 70S ribosome. This chain is Large ribosomal subunit protein uL22, found in Corynebacterium urealyticum (strain ATCC 43042 / DSM 7109).